We begin with the raw amino-acid sequence, 191 residues long: Calcium-activated potassium channel subunit beta-1 (191 aa).

Residues 1–18 lie on the Cytoplasmic side of the membrane; the sequence is MGKKLVMAQKRGETRALC. Residues 19–39 traverse the membrane as a helical segment; it reads LGVAMVVCAAITYYVLGTTVL. Residues 40–155 lie on the Extracellular side of the membrane; the sequence is PLYQKSVWTQ…VVYQRLYGPQ (116 aa). N-linked (GlcNAc...) asparagine glycosylation is found at N80 and N142. A helical membrane pass occupies residues 156 to 176; it reads VLLFSFFWPTFLLTGGLLLIA. At 177 to 191 the chain is on the cytoplasmic side; the sequence is MVKLNRSLSILAAQK.

This sequence belongs to the KCNMB (TC 8.A.14.1) family. KCNMB1 subfamily. As to quaternary structure, interacts with KCNMA1 tetramer. There are probably 4 molecules of KCMNB1 per KCNMA1 tetramer. In terms of processing, N-glycosylated. As to expression, expressed in many tissues containing smooth muscles. In brain and heart, it is not expressed except in the vasculature, such as cerebral arteries, aorta and corona arteries.

The protein resides in the membrane. Regulatory subunit of the calcium activated potassium KCNMA1 (maxiK) channel. Modulates the calcium sensitivity and gating kinetics of KCNMA1, thereby contributing to KCNMA1 channel diversity. Increases the apparent Ca(2+)/voltage sensitivity of the KCNMA1 channel. It also modifies KCNMA1 channel kinetics and alters its pharmacological properties. It slows down the activation and the deactivation kinetics of the channel. Acts as a negative regulator of smooth muscle contraction by enhancing the calcium sensitivity to KCNMA1. Its presence is also a requirement for internal binding of the KCNMA1 channel opener dehydrosoyasaponin I (DHS-1) triterpene glycoside and for external binding of the agonist hormone 17-beta-estradiol (E2). Increases the binding activity of charybdotoxin (CTX) toxin to KCNMA1 peptide blocker by increasing the CTX association rate and decreasing the dissociation rate. In Mus musculus (Mouse), this protein is Calcium-activated potassium channel subunit beta-1 (Kcnmb1).